Consider the following 313-residue polypeptide: Homoserine O-acetyltransferase (313 aa).

The active-site Acyl-thioester intermediate is the Cys144. Substrate-binding residues include Lys165 and Ser194. His236 (proton acceptor) is an active-site residue. Glu238 is an active-site residue. Residue Arg250 coordinates substrate.

This sequence belongs to the MetA family.

The protein localises to the cytoplasm. It carries out the reaction L-homoserine + acetyl-CoA = O-acetyl-L-homoserine + CoA. Its pathway is amino-acid biosynthesis; L-methionine biosynthesis via de novo pathway; O-acetyl-L-homoserine from L-homoserine: step 1/1. Functionally, transfers an acetyl group from acetyl-CoA to L-homoserine, forming acetyl-L-homoserine. The chain is Homoserine O-acetyltransferase from Jannaschia sp. (strain CCS1).